The following is a 423-amino-acid chain: D-tagatose-1,6-bisphosphate aldolase subunit GatZ (423 aa).

The protein belongs to the GatZ/KbaZ family. GatZ subfamily. As to quaternary structure, forms a complex with GatY.

The protein operates within carbohydrate metabolism; D-tagatose 6-phosphate degradation; D-glyceraldehyde 3-phosphate and glycerone phosphate from D-tagatose 6-phosphate: step 2/2. Its function is as follows. Component of the tagatose-1,6-bisphosphate aldolase GatYZ that is required for full activity and stability of the Y subunit. Could have a chaperone-like function for the proper and stable folding of GatY. When expressed alone, GatZ does not show any aldolase activity. Is involved in the catabolism of galactitol. This chain is D-tagatose-1,6-bisphosphate aldolase subunit GatZ, found in Salmonella typhimurium (strain LT2 / SGSC1412 / ATCC 700720).